Consider the following 301-residue polypeptide: MTEKHTTPDGLVIVDKPSGFTSHDVVAKMRGIARTRRVGHAGTLDPMATGVLVLGVERATKLLGHLALTEKEYLGTIRLGQTTLTDDAEGEITGSRDASKVTWEAIDAGVAELSGDIMQVPSKVSAIKIKGVRSYKRAREGEEFEIPARPVTVSSFAVYDVRDAVADDGTPVLDLVVSVTCSSGTYIRALARDLGAGLGVGGHLTALRRTRVGPYKLDGARTLDQLQQELTVMPVADAAGAAFPRWGVDARRARLLANGVRLEMPEEYTGVGAVAVFDPEGRLLALVEEHKGKAKSLAVFG.

Residue Asp-45 is the Nucleophile of the active site.

It belongs to the pseudouridine synthase TruB family. Type 1 subfamily.

It carries out the reaction uridine(55) in tRNA = pseudouridine(55) in tRNA. Functionally, responsible for synthesis of pseudouridine from uracil-55 in the psi GC loop of transfer RNAs. This is tRNA pseudouridine synthase B from Streptomyces coelicolor (strain ATCC BAA-471 / A3(2) / M145).